The following is a 579-amino-acid chain: CTP synthase (579 aa).

One can recognise a Glutamine amidotransferase type-1 domain in the interval 310–558 (YVELHDAYLS…VAAAIGCLDQ (249 aa)). Active-site for GATase activity residues include Cys402, His531, and Glu533.

The protein belongs to the CTP synthase family.

It catalyses the reaction UTP + L-glutamine + ATP + H2O = CTP + L-glutamate + ADP + phosphate + 2 H(+). Its pathway is pyrimidine metabolism; CTP biosynthesis via de novo pathway; CTP from UDP: step 2/2. Functionally, catalyzes the ATP-dependent amination of UTP to CTP with either L-glutamine or ammonia as the source of nitrogen. This is CTP synthase (pyr-7) from Neurospora crassa (strain ATCC 24698 / 74-OR23-1A / CBS 708.71 / DSM 1257 / FGSC 987).